Reading from the N-terminus, the 367-residue chain is Porin Omp2a (367 aa).

The first 22 residues, 1-22 (MNIKSLLLGSAAALVAASGAQA), serve as a signal peptide directing secretion.

It belongs to the alphaproteobacteria porin family. In terms of assembly, monomer.

It localises to the cell outer membrane. Its function is as follows. Forms passive diffusion pores that allow small molecular weight hydrophilic materials across the outer membrane. This is Porin Omp2a (omp2a) from Brucella melitensis biotype 1 (strain ATCC 23456 / CCUG 17765 / NCTC 10094 / 16M).